Consider the following 491-residue polypeptide: UDP-N-acetylmuramate--L-alanine ligase (491 aa).

Residue 126-132 coordinates ATP; it reads GTHGKTT.

The protein belongs to the MurCDEF family.

Its subcellular location is the cytoplasm. The catalysed reaction is UDP-N-acetyl-alpha-D-muramate + L-alanine + ATP = UDP-N-acetyl-alpha-D-muramoyl-L-alanine + ADP + phosphate + H(+). The protein operates within cell wall biogenesis; peptidoglycan biosynthesis. Functionally, cell wall formation. The chain is UDP-N-acetylmuramate--L-alanine ligase from Salmonella typhimurium (strain LT2 / SGSC1412 / ATCC 700720).